We begin with the raw amino-acid sequence, 125 residues long: Small ribosomal subunit protein uS13 (125 aa).

Positions Gly-95–Lys-125 are disordered. Basic residues predominate over residues Thr-105 to Lys-125.

It belongs to the universal ribosomal protein uS13 family. As to quaternary structure, part of the 30S ribosomal subunit. Forms a loose heterodimer with protein S19. Forms two bridges to the 50S subunit in the 70S ribosome.

Located at the top of the head of the 30S subunit, it contacts several helices of the 16S rRNA. In the 70S ribosome it contacts the 23S rRNA (bridge B1a) and protein L5 of the 50S subunit (bridge B1b), connecting the 2 subunits; these bridges are implicated in subunit movement. Contacts the tRNAs in the A and P-sites. The chain is Small ribosomal subunit protein uS13 from Leptospira biflexa serovar Patoc (strain Patoc 1 / Ames).